The sequence spans 312 residues: Methionyl-tRNA formyltransferase (312 aa).

107–110 (SLLP) lines the (6S)-5,6,7,8-tetrahydrofolate pocket.

Belongs to the Fmt family.

The enzyme catalyses L-methionyl-tRNA(fMet) + (6R)-10-formyltetrahydrofolate = N-formyl-L-methionyl-tRNA(fMet) + (6S)-5,6,7,8-tetrahydrofolate + H(+). Functionally, attaches a formyl group to the free amino group of methionyl-tRNA(fMet). The formyl group appears to play a dual role in the initiator identity of N-formylmethionyl-tRNA by promoting its recognition by IF2 and preventing the misappropriation of this tRNA by the elongation apparatus. This Endomicrobium trichonymphae protein is Methionyl-tRNA formyltransferase.